A 562-amino-acid chain; its full sequence is Methionine--tRNA ligase, mitochondrial (562 aa).

A mitochondrion-targeting transit peptide spans 1–10 (MLRSLALRTF). The 'HIGH' region motif lies at 43 to 53 (FYVNAAPHLGH). A 'KMSKS' region motif is present at residues 332-336 (KMSKS). ATP is bound at residue K335.

It belongs to the class-I aminoacyl-tRNA synthetase family.

The protein localises to the mitochondrion matrix. It carries out the reaction tRNA(Met) + L-methionine + ATP = L-methionyl-tRNA(Met) + AMP + diphosphate. The chain is Methionine--tRNA ligase, mitochondrial (mars2) from Xenopus laevis (African clawed frog).